The chain runs to 501 residues: Zinc-binding lipoprotein AdcA (501 aa).

An N-terminal signal peptide occupies residues 1-18 (MKKISLLLASLCALFLVA). Cys-19 carries N-palmitoyl cysteine lipidation. A lipid anchor (S-diacylglycerol cysteine) is attached at Cys-19. His-63 contacts Zn(2+). A disordered region spans residues 116-136 (LPGGEEEEGDHDHGEEGHHHE). The tract at residues 120–136 (EEEEGDHDHGEEGHHHE) is his-rich loop. Over residues 125–136 (DHDHGEEGHHHE) the composition is skewed to basic and acidic residues. Residues His-140, His-204, and Glu-279 each contribute to the Zn(2+) site.

This sequence belongs to the bacterial solute-binding protein 9 family.

The protein resides in the cell membrane. Part of the ATP-binding cassette (ABC) transport system AdcABC involved in zinc import. Binds zinc with high affinity and specificity and delivers it to the membrane permease for translocation into the cytoplasm. The protein is Zinc-binding lipoprotein AdcA (adcA) of Streptococcus pneumoniae serotype 4 (strain ATCC BAA-334 / TIGR4).